Consider the following 233-residue polypeptide: Uracil-DNA glycosylase (233 aa).

Asp70 serves as the catalytic Proton acceptor.

Belongs to the uracil-DNA glycosylase (UDG) superfamily. UNG family.

The protein resides in the cytoplasm. The enzyme catalyses Hydrolyzes single-stranded DNA or mismatched double-stranded DNA and polynucleotides, releasing free uracil.. In terms of biological role, excises uracil residues from the DNA which can arise as a result of misincorporation of dUMP residues by DNA polymerase or due to deamination of cytosine. The chain is Uracil-DNA glycosylase from Helicobacter pylori (strain G27).